The primary structure comprises 1523 residues: Dicer-like protein 1 (1523 aa).

Positions Leu24–Thr38 are enriched in polar residues. Residues Leu24–Arg58 are disordered. The Helicase ATP-binding domain occupies Leu123 to Leu304. Residue Leu136–Thr143 participates in ATP binding. Residues Asp249–His252 carry the DEAH box motif. Residues Leu444–Leu617 enclose the Helicase C-terminal domain. A Dicer dsRNA-binding fold domain is found at Ala640–Ala730. The 129-residue stretch at Glu879–Ala1007 folds into the PAZ domain. RNase III domains are found at residues Ile1031 to Gly1190 and Gly1241 to Asp1392. Positions 1281, 1378, and 1381 each coordinate Mg(2+). The 69-residue stretch at Thr1426 to Asn1494 folds into the DRBM domain. Positions 1438, 1465, 1506, and 1508 each coordinate Zn(2+).

It belongs to the helicase family. Dicer subfamily. It depends on Mg(2+) as a cofactor. The cofactor is Mn(2+).

Dicer-like endonuclease involved in cleaving double-stranded RNA in the RNA interference (RNAi) pathway. Produces 21 to 25 bp dsRNAs (siRNAs) which target the selective destruction of homologous RNAs leading to sequence-specific suppression of gene expression, called post-transcriptional gene silencing (PTGS). Part of a broad host defense response against viral infection and transposons. The chain is Dicer-like protein 1 (dcl1) from Aspergillus oryzae (strain ATCC 42149 / RIB 40) (Yellow koji mold).